A 184-amino-acid chain; its full sequence is Trypsin/chymotrypsin inhibitor (184 aa).

2 disulfide bridges follow: cysteine 39–cysteine 84 and cysteine 136–cysteine 147.

The protein belongs to the protease inhibitor I3 (leguminous Kunitz-type inhibitor) family. Homodimer.

In terms of biological role, inhibits trypsin and alpha-chymotrypsin. The chain is Trypsin/chymotrypsin inhibitor from Alocasia macrorrhizos (Giant taro).